Here is a 362-residue protein sequence, read N- to C-terminus: Protein RecA (362 aa).

ATP is bound at residue 77 to 84; sequence GPESSGKT.

Belongs to the RecA family.

It is found in the cytoplasm. Its function is as follows. Can catalyze the hydrolysis of ATP in the presence of single-stranded DNA, the ATP-dependent uptake of single-stranded DNA by duplex DNA, and the ATP-dependent hybridization of homologous single-stranded DNAs. It interacts with LexA causing its activation and leading to its autocatalytic cleavage. This Rhizobium leguminosarum bv. trifolii (strain WSM2304) protein is Protein RecA.